The following is a 410-amino-acid chain: Alanine racemase (410 aa).

An RPE1 insert domain is found at 28 to 76; sequence VDFLHNVANKEEFAGNTSPRTAAYTLVREDASLGSTPKLPLGASYAKNL. The Proton acceptor; specific for D-alanine role is filled by K83. Position 83 is an N6-(pyridoxal phosphate)lysine (K83). R182 is a binding site for substrate. The Proton acceptor; specific for L-alanine role is filled by Y305. Residue M353 coordinates substrate.

This sequence belongs to the alanine racemase family. Pyridoxal 5'-phosphate is required as a cofactor.

It catalyses the reaction L-alanine = D-alanine. It functions in the pathway amino-acid biosynthesis; D-alanine biosynthesis; D-alanine from L-alanine: step 1/1. Catalyzes the interconversion of L-alanine and D-alanine. May also act on other amino acids. In Rickettsia bellii (strain RML369-C), this protein is Alanine racemase (alr).